The following is a 139-amino-acid chain: UPF0310 protein RSal33209_2865 (139 aa).

It belongs to the UPF0310 family.

The sequence is that of UPF0310 protein RSal33209_2865 from Renibacterium salmoninarum (strain ATCC 33209 / DSM 20767 / JCM 11484 / NBRC 15589 / NCIMB 2235).